Reading from the N-terminus, the 144-residue chain is Putative pre-16S rRNA nuclease (144 aa).

The protein belongs to the YqgF nuclease family.

Its subcellular location is the cytoplasm. In terms of biological role, could be a nuclease involved in processing of the 5'-end of pre-16S rRNA. In Lactiplantibacillus plantarum (strain ATCC BAA-793 / NCIMB 8826 / WCFS1) (Lactobacillus plantarum), this protein is Putative pre-16S rRNA nuclease.